A 192-amino-acid chain; its full sequence is Small ribosomal subunit protein uS5 (192 aa).

The segment at 1-21 (MAAERERGGRERGGRDRDERD) is disordered. Residues 24 to 87 (FVDKLVHINR…DSAKRNLTRV (64 aa)) enclose the S5 DRBM domain.

Belongs to the universal ribosomal protein uS5 family. As to quaternary structure, part of the 30S ribosomal subunit. Contacts proteins S4 and S8.

In terms of biological role, with S4 and S12 plays an important role in translational accuracy. Functionally, located at the back of the 30S subunit body where it stabilizes the conformation of the head with respect to the body. The sequence is that of Small ribosomal subunit protein uS5 from Afipia carboxidovorans (strain ATCC 49405 / DSM 1227 / KCTC 32145 / OM5) (Oligotropha carboxidovorans).